Reading from the N-terminus, the 504-residue chain is Arabinose import ATP-binding protein AraG (504 aa).

ABC transporter domains are found at residues 8 to 243 (LSFR…MVGR) and 256 to 499 (YGEE…MPKV). 40–47 (GENGAGKS) provides a ligand contact to ATP.

It belongs to the ABC transporter superfamily. Arabinose importer (TC 3.A.1.2.2) family. In terms of assembly, the complex is composed of two ATP-binding proteins (AraG), two transmembrane proteins (AraH) and a solute-binding protein (AraF).

It localises to the cell inner membrane. The catalysed reaction is L-arabinose(out) + ATP + H2O = L-arabinose(in) + ADP + phosphate + H(+). In terms of biological role, part of the ABC transporter complex AraFGH involved in arabinose import. Responsible for energy coupling to the transport system. This Escherichia coli O157:H7 protein is Arabinose import ATP-binding protein AraG.